We begin with the raw amino-acid sequence, 83 residues long: Type 3 secretion system needle filament protein (83 aa).

It belongs to the SctF family. In terms of assembly, the core secretion machinery of the T3SS is composed of approximately 20 different proteins, including cytoplasmic components, a base, an export apparatus and a needle. This subunit polymerizes and forms the helical needle filament. Interacts with the needle tip protein IpaD/SctA. Interacts with the export apparatus components SpaP/SctR, SpaQ/SctS and SpaR/SctT.

Its subcellular location is the secreted. The protein resides in the cell surface. Component of the type III secretion system (T3SS), also called injectisome, which is used to inject bacterial effector proteins into eukaryotic host cells. MxiH/SctF forms the external needle filament that protrudes from the bacterial surface. In terms of biological role, during infection, can induce innate immune responses. The needle proteins interact with host TLR2 or TLR4, and induce signaling by NF-kappa-B and/or AP-1. This activation is MyD88 dependent and results in increased expression of cytokines, including TNF-alpha, IL-6 and IL-8. The polypeptide is Type 3 secretion system needle filament protein (Shigella flexneri).